A 164-amino-acid polypeptide reads, in one-letter code: Large ribosomal subunit protein uL15 (164 aa).

The tract at residues M1 to G52 is disordered. The segment covering R21–G37 has biased composition (gly residues).

This sequence belongs to the universal ribosomal protein uL15 family. As to quaternary structure, part of the 50S ribosomal subunit.

In terms of biological role, binds to the 23S rRNA. The protein is Large ribosomal subunit protein uL15 of Anaeromyxobacter sp. (strain Fw109-5).